The chain runs to 584 residues: Kelch domain-containing protein 4 (584 aa).

The span at 1–10 shows a compositional bias: basic residues; it reads MGKKGKKEKK. Disordered regions lie at residues 1 to 33 and 50 to 69; these read MGKK…RKEE and KTQV…NASL. Over residues 11 to 24 the composition is skewed to basic and acidic residues; the sequence is GRGAEKTAAKMEKK. 5 Kelch repeats span residues 77–129, 133–187, 188–238, 243–289, and 308–361; these read ELIL…VVPQ, QLWV…AWKR, QLIL…LMAV, SIAI…INPS, and QILV…RRGK. Disordered regions lie at residues 348-381, 405-433, and 482-533; these read KGPK…APEP, SGLG…CPRS, and PKSQ…EQFE. Phosphoserine is present on Ser-418. A Kelch 6 repeat occupies 443-494; that stretch reads LLYVYGGMFEAGDRQVTLSDLYCLDLHKMEEWKTLVEMDPKSQEWLEESDSE. Over residues 487–519 the composition is skewed to acidic residues; that stretch reads WLEESDSEEDSSSDEESEDGEDKDQEDSAEEGA. Residues 520-533 show a composition bias toward basic and acidic residues; the sequence is DPQHPEVARGEQFE.

In Mus musculus (Mouse), this protein is Kelch domain-containing protein 4 (Klhdc4).